A 220-amino-acid polypeptide reads, in one-letter code: MAMVTTEAAAAATTAATAAAEKPQDVEKPDYAPYNGASTTADGGTGARARRGDGGGGVVDSVVARWRREDMLDKSPLALHAAAAIFAFVALVLVASNQHGDWMQFDRYQEYRYLLAIASLALLYSLAQAARHAHRMRGGVDPVSSASARLLDFVGDQVVAYLLMSALSAAVPITNRMRSAVVNNFTDATAAAISMAFFSFVALALSAVVSGYKLSKQTYM.

Residues 1–74 (MAMVTTEAAA…RWRREDMLDK (74 aa)) are Cytoplasmic-facing. The tract at residues 13 to 56 (TTAATAAAEKPQDVEKPDYAPYNGASTTADGGTGARARRGDGGG) is disordered. Residues 75-95 (SPLALHAAAAIFAFVALVLVA) form a helical membrane-spanning segment. Topologically, residues 96-109 (SNQHGDWMQFDRYQ) are extracellular. A helical transmembrane segment spans residues 110 to 127 (EYRYLLAIASLALLYSLA). Residues 128–152 (QAARHAHRMRGGVDPVSSASARLLD) lie on the Cytoplasmic side of the membrane. Residues 153–173 (FVGDQVVAYLLMSALSAAVPI) form a helical membrane-spanning segment. Topologically, residues 174–188 (TNRMRSAVVNNFTDA) are extracellular. N-linked (GlcNAc...) asparagine glycosylation is present at Asn184. Residues 189-209 (TAAAISMAFFSFVALALSAVV) form a helical membrane-spanning segment. At 210 to 220 (SGYKLSKQTYM) the chain is on the cytoplasmic side.

The protein belongs to the Casparian strip membrane proteins (CASP) family. Homodimer and heterodimers.

The protein localises to the cell membrane. This Sorghum bicolor (Sorghum) protein is CASP-like protein 4B1.